The chain runs to 690 residues: DNA-directed RNA polymerase subunit beta' (690 aa).

Residues Cys-76, Cys-78, Cys-94, and Cys-97 each contribute to the Zn(2+) site. The Mg(2+) site is built by Asp-496, Asp-498, and Asp-500.

The protein belongs to the RNA polymerase beta' chain family. RpoC1 subfamily. As to quaternary structure, in plastids the minimal PEP RNA polymerase catalytic core is composed of four subunits: alpha, beta, beta', and beta''. When a (nuclear-encoded) sigma factor is associated with the core the holoenzyme is formed, which can initiate transcription. Mg(2+) serves as cofactor. Zn(2+) is required as a cofactor.

The protein resides in the plastid. It is found in the chloroplast. The enzyme catalyses RNA(n) + a ribonucleoside 5'-triphosphate = RNA(n+1) + diphosphate. Functionally, DNA-dependent RNA polymerase catalyzes the transcription of DNA into RNA using the four ribonucleoside triphosphates as substrates. The chain is DNA-directed RNA polymerase subunit beta' from Lemna minor (Common duckweed).